We begin with the raw amino-acid sequence, 2113 residues long: Unconventional myosin-VIIb (2113 aa).

The Myosin motor domain occupies 65–760; the sequence is QGVDDMIRLG…QDTVLEIRRS (696 aa). 158-165 is an ATP binding site; that stretch reads GESGAGKT. Positions 637–659 are actin-binding; the sequence is LDQLMRILTNCQPYFVRCIKPNE. 6 IQ domains span residues 745–765, 763–792, 786–815, 809–838, 832–861, and 855–884; these read IFLK…ALDG, LDGA…AAVT, QRRA…GFER, ILVG…RIVQ, MRQR…AVVI, and KRRA…TGPQ. Phosphoserine is present on Ser-904. A mediates interaction with ANKS4B region spans residues 962-1578; it reads EEEVDSLAEY…STQLLSLLAM (617 aa). A MyTH4 1 domain is found at 989–1189; the sequence is HIQKPLRYPL…PTWLELQAVK (201 aa). The FERM 1 domain maps to 1194–1503; the sequence is IPIQVILATG…GGLKERSVFA (310 aa). At Thr-1339 the chain carries Phosphothreonine. Ser-1368 bears the Phosphoserine mark. A mediates interaction with CDHR2, CDHR5 and USH1C region spans residues 1497-2113; that stretch reads KERSVFAMAL…GFRAPAPANP (617 aa). Residues 1498 to 1564 form the SH3 domain; that stretch reads ERSVFAMALQ…PTACLYTIPS (67 aa). MyTH4 domains are found at residues 1641 to 1790 and 1790 to 1896; these read YSPE…KAAE and EQNV…LNVT. Residue Ser-1642 is modified to Phosphoserine. An FERM 2 domain is found at 1796 to 2099; that stretch reads LHHEVYLPND…SYVQQLLNTV (304 aa).

It belongs to the TRAFAC class myosin-kinesin ATPase superfamily. Myosin family. As to quaternary structure, part of the IMAC/intermicrovillar adhesion complex/intermicrovillar tip-link complex composed of ANKS4B, MYO7B, USH1C, CDHR2 and CDHR5. Interacts with CDHR2. Interacts with CDHR5. Interacts with USH1C. Interacts with ANKS4B; requires initial interaction with USH1C. Interacts with CALML4; the interaction mediates the association of CALML4 with the IMAC/intermicrovillar adhesion complex. As to expression, expressed primarily in kidney and intestine. Detected in proximal tubule cells of the kidney and enterocytes of the intestine, specifically the distal tips of apical microvilli on these transporting epithelial cells (at protein level).

It is found in the cytoplasm. The protein localises to the cytoskeleton. Its subcellular location is the cell projection. The protein resides in the microvillus. Functionally, myosins are actin-based motor molecules with ATPase activity. Their highly divergent tails are presumed to bind to membranous compartments, which would be moved relative to actin filaments. As part of the intermicrovillar adhesion complex/IMAC plays a role in epithelial brush border differentiation, controlling microvilli organization and length. May link the complex to the actin core bundle of microvilli. The polypeptide is Unconventional myosin-VIIb (Myo7b) (Mus musculus (Mouse)).